We begin with the raw amino-acid sequence, 637 residues long: Chaperone protein DnaK (637 aa).

The residue at position 198 (Thr-198) is a Phosphothreonine; by autocatalysis. The disordered stretch occupies residues 597 to 637 (MYQQQAEGDAARDAAQDAAKDDVVDAEFTEVDDDKNDKKSA). The span at 605 to 619 (DAARDAAQDAAKDDV) shows a compositional bias: basic and acidic residues. Residues 620–630 (VDAEFTEVDDD) are compositionally biased toward acidic residues.

It belongs to the heat shock protein 70 family.

In terms of biological role, acts as a chaperone. The protein is Chaperone protein DnaK of Afipia carboxidovorans (strain ATCC 49405 / DSM 1227 / KCTC 32145 / OM5) (Oligotropha carboxidovorans).